Consider the following 1054-residue polypeptide: CCAAT/enhancer-binding protein zeta (1054 aa).

Residues 1–20 (MAAVKEPLEFHAKRPWRPEE) show a composition bias toward basic and acidic residues. Disordered stretches follow at residues 1–42 (MAAV…GFSL) and 102–160 (VEED…PKVK). Over residues 21–34 (AVEDPDEEDEDNTS) the composition is skewed to acidic residues. Residues 109–120 (EKENSSKKEVKI) are compositionally biased toward basic and acidic residues. Ser-113 is subject to Phosphoserine. The span at 124–138 (NNKNTAESQRTSVNK) shows a compositional bias: polar residues. Ser-629 carries the phosphoserine modification. Lys-695 is subject to N6-acetyllysine. The residue at position 835 (Ser-835) is a Phosphoserine. Disordered regions lie at residues 873–902 (RTKG…DEVS) and 915–969 (DEDG…KKRN). Composition is skewed to acidic residues over residues 882-902 (LDED…DEVS) and 915-933 (DEDG…ESVP). Phosphoserine occurs at positions 959, 973, and 978. The tract at residues 1031-1054 (IIKKKKHFKKKRIKTTQKTKKQRK) is disordered.

It belongs to the CBF/MAK21 family.

Its subcellular location is the nucleus. Stimulates transcription from the HSP70 promoter. The sequence is that of CCAAT/enhancer-binding protein zeta (CEBPZ) from Homo sapiens (Human).